The primary structure comprises 397 residues: Heterogeneous nuclear ribonucleoprotein K homolog (397 aa).

A disordered region spans residues 1-41 (MMIKVGAAINGTDSPKAMKREHDNDDGDRTGRHKRPKTDGF). The span at 16-30 (KAMKREHDNDDGDRT) shows a compositional bias: basic and acidic residues. KH domains are found at residues 49 to 111 (KFEV…LKDV) and 124 to 189 (PCEV…IEEV). The disordered stretch occupies residues 220–279 (GGFPGNMPAGGPPNNRGPAPQRGGQGPPGGPRSYGGAITQGGGQRSFEAGDFQQFRGGPG). Low complexity predominate over residues 224 to 241 (GNMPAGGPPNNRGPAPQR). Residues 316 to 379 (VTTAQVTIPS…QQIHSAQYLL (64 aa)) form the KH 3 domain.

Interacts with alg-1; the interaction is direct and may be strengthened through RNA-protein association. As to expression, expressed in gut, muscle, neuronal and hypodermal tissues. Highly expressed in the germline and oocytes.

It localises to the nucleus. Its subcellular location is the cytoplasm. In terms of biological role, RNA-binding protein which functions together with alg-1, a component of the miRNA loading complex, to modulate the processing and activity of specific miRNAs such as miR-58 and let-7 to regulate gene expression at the post-transcriptional level during embryonic, hypodermal and neuronal development. Promotes the lsy-6-mediated repression of cog-1 in uterine cells. In embryos, may play a role in the DNA damage response. The sequence is that of Heterogeneous nuclear ribonucleoprotein K homolog from Caenorhabditis elegans.